We begin with the raw amino-acid sequence, 504 residues long: Peroxisome proliferator-activated receptor gamma (504 aa).

Ser111 is subject to Phosphoserine; by MAPK. The nuclear receptor DNA-binding region spans 135-209; it reads AIECRVCGDK…VGMSHNAIRF (75 aa). 2 consecutive NR C4-type zinc fingers follow at residues 138–158 and 175–197; these read CRVC…CEGC and CDLN…FQKC. Positions 204-279 are interaction with FAM120B; the sequence is HNAIRFGRMP…DKSPFVIYDM (76 aa). The region spanning 237-502 is the NR LBD domain; that stretch reads DLRALAKHLY…HPLLQEIYKD (266 aa). Lys251 is covalently cross-linked (Glycyl lysine isopeptide (Lys-Gly) (interchain with G-Cter in ubiquitin)). The 9aaTAD signature appears at 494–502; sequence PLLQEIYKD.

This sequence belongs to the nuclear hormone receptor family. NR1 subfamily. In terms of assembly, interacts with FOXO1 (acetylated form). Heterodimer with other nuclear receptors, such as RXRA. The heterodimer with the retinoic acid receptor RXRA is called adipocyte-specific transcription factor ARF6. Interacts with NCOA6 coactivator, leading to a strong increase in transcription of target genes. Interacts with coactivator PPARBP, leading to a mild increase in transcription of target genes. Interacts with NOCA7 in a ligand-inducible manner. Interacts with NCOA1 and NCOA2 LXXLL motifs. Interacts with ASXL1, ASXL2, DNTTIP2, FAM120B, MAP2K1/MEK1, NR0B2, PDPK1, PRDM16, PRMT2 and TGFB1I1. Interacts (when activated by agonist) with PPP5C. Interacts with HELZ2 and THRAP3; the interaction stimulates the transcriptional activity of PPARG. Interacts with PER2, the interaction is ligand dependent and blocks PPARG recruitment to target promoters. Interacts with NOCT. Interacts with ACTN4. Interacts (when in the liganded conformation) with GPS2. Interacts with CRY1 and CRY2 in a ligand-dependent manner. In the absence of hormonal ligand, interacts with TACC1. In macrophages, interacts with PAQR3 and STUB1; the interactions promote PPARG poylubiquitination and STUB1-mediated degradation. Phosphorylated at basal conditions and dephosphorylated when treated with the ligand. May be dephosphorylated by PPP5C. The phosphorylated form may be inactive and dephosphorylation induces adipogenic activity. Post-translationally, ubiquitinated by E3 ubiquitin-protein ligase complex containing FBXO9; leading to proteasomal degradation. Ubiquitinated at Lys-251 by TRIM55 leading to proteasomal degradation. Ubiquitinated by E3 ubiquitin-protein ligase STUB1/CHIP; leading to proteasomal degradation. Highest expression in adipose tissue and lower in spleen. Very low levels in kidney, intestine, lung and muscle.

It is found in the nucleus. The protein resides in the cytoplasm. Its activity is regulated as follows. PDPK1 activates its transcriptional activity independently of its kinase activity. In terms of biological role, nuclear receptor that binds peroxisome proliferators such as hypolipidemic drugs and fatty acids. Once activated by a ligand, the nuclear receptor binds to DNA specific PPAR response elements (PPRE) and modulates the transcription of its target genes, such as acyl-CoA oxidase. It therefore controls the peroxisomal beta-oxidation pathway of fatty acids. Key regulator of adipocyte differentiation and glucose homeostasis. ARF6 acts as a key regulator of the tissue-specific adipocyte P2 (aP2) enhancer. Acts as a critical regulator of gut homeostasis by suppressing NF-kappa-B-mediated pro-inflammatory responses. Plays a role in the regulation of cardiovascular circadian rhythms by regulating the transcription of BMAL1 in the blood vessels. This Sus scrofa (Pig) protein is Peroxisome proliferator-activated receptor gamma (PPARG).